The chain runs to 130 residues: Small ribosomal subunit protein uS9 (130 aa).

The protein belongs to the universal ribosomal protein uS9 family.

In Polaromonas sp. (strain JS666 / ATCC BAA-500), this protein is Small ribosomal subunit protein uS9.